Here is a 283-residue protein sequence, read N- to C-terminus: Putative sugar uptake protein BA_0200/GBAA_0200/BAS0200 (283 aa).

Helical transmembrane passes span 4 to 21, 26 to 48, 52 to 71, 84 to 106, 110 to 132, 151 to 173, 178 to 195, 208 to 230, 234 to 253, and 260 to 279; these read LLAL…LVSV, GAYS…MYVF, ALTM…WALG, VSTT…GVIA, WTTT…GVVF, LLTL…WYNI, AILP…VLTS, ALSG…RVGV, FPLS…VFLG, and QLIF…VLLG.

The protein belongs to the GRP transporter (TC 2.A.7.5) family.

Its subcellular location is the cell membrane. The sequence is that of Putative sugar uptake protein BA_0200/GBAA_0200/BAS0200 from Bacillus anthracis.